The following is a 192-amino-acid chain: Large ribosomal subunit protein bL9 (192 aa).

A disordered region spans residues 172–192 (DALRPEDFFDPEADGVDEDEA). The segment covering 179–192 (FFDPEADGVDEDEA) has biased composition (acidic residues).

Belongs to the bacterial ribosomal protein bL9 family.

Binds to the 23S rRNA. The polypeptide is Large ribosomal subunit protein bL9 (Rhizobium johnstonii (strain DSM 114642 / LMG 32736 / 3841) (Rhizobium leguminosarum bv. viciae)).